A 652-amino-acid polypeptide reads, in one-letter code: MNPNNRSEHDTIKVTPNSELQTNHNQYPLADNPNSTLEELNYKEFLRMTEDSSTEVLDNSTVKDAVGTGISVVGQILGVVGVPFAGALTSFYQSFLNTIWPSDADPWKAFMAQVEVLIDKKIEEYAKSKALAELQGLQNNFEDYVNALNSWKKTPLSLRSKRSQDRIRELFSQAESHFRNSMPSFAVSKFEVLFLPTYAQAANTHLLLLKDAQVFGEEWGYSSEDVAEFYHRQLKLTQQYTDHCVNWYNVGLNGLRGSTYDAWVKFNRFRREMTLTVLDLIVLFPFYDIRLYSKGVKTELTRDIFTDPIFSLNTLQEYGPTFLSIENSIRKPHLFDYLQGIEFHTRLQPGYFGKDSFNYWSGNYVETRPSIGSSKTITSPFYGDKSTEPVQKLSFDGQKVYRTIANTDVAAWPNGKVYLGVTKVDFSQYDDQKNETSTQTYDSKRNNGHVSAQDSIDQLPPETTDEPLEKAYSHQLNYAECFLMQDRRGTIPFFTWTHRSVDFFNTIDAEKITQLPVVKAYALSSGASIIEGPGFTGGNLLFLKESSNSIAKFKVTLNSAALLQRYRVRIRYASTTNLRLFVQNSNNDFLVIYINKTMNKDDDLTYQTFDLATTNSNMGFSGDKNELIIGAESFVSNEKIYIDKIEFIPVQL.

A compositionally biased stretch (basic and acidic residues) spans 1–12; sequence MNPNNRSEHDTI. Disordered regions lie at residues 1 to 33 and 433 to 465; these read MNPN…ADNP and KNET…ETTD. The segment covering 14–33 has biased composition (polar residues); the sequence is VTPNSELQTNHNQYPLADNP.

This sequence belongs to the delta endotoxin family. As to quaternary structure, monomer.

Promotes colloidosmotic lysis by binding to the midgut epithelial cells of Coleoptera. Has moderate level of toxicity to southern corn rootworm. This Bacillus thuringiensis protein is Pesticidal crystal protein Cry3Bb (cry3Bb).